A 153-amino-acid chain; its full sequence is Large ribosomal subunit protein bL9 (153 aa).

The protein belongs to the bacterial ribosomal protein bL9 family.

In terms of biological role, binds to the 23S rRNA. The chain is Large ribosomal subunit protein bL9 from Gloeobacter violaceus (strain ATCC 29082 / PCC 7421).